Here is a 575-residue protein sequence, read N- to C-terminus: Hemagglutinin-neuraminidase (575 aa).

Over 1-34 the chain is Intravirion; that stretch reads MAEKGKTNSSYWSTTRNDNSTVNTYIDTPAGKTH. The helical transmembrane segment at 35 to 55 threads the bilayer; it reads IWLLIATTMHTILSFIIMILC. Topologically, residues 56 to 575 are virion surface; it reads IDLIIKQDTC…SIPKICKITS (520 aa). An N-linked (GlcNAc...) asparagine; by host glycan is attached at Asn77. Intrachain disulfides connect Cys192–Cys216, Cys258–Cys271, Cys357–Cys469, and Cys463–Cys473. The involved in neuraminidase activity stretch occupies residues 254–259; the sequence is NRKSCS. 2 N-linked (GlcNAc...) asparagine; by host glycosylation sites follow: Asn499 and Asn511. The cysteines at positions 535 and 544 are disulfide-linked.

Belongs to the paramyxoviruses hemagglutinin-neuraminidase family. Homotetramer; composed of disulfide-linked homodimers. Interacts with F protein trimer.

Its subcellular location is the virion membrane. The protein resides in the host cell membrane. The enzyme catalyses Hydrolysis of alpha-(2-&gt;3)-, alpha-(2-&gt;6)-, alpha-(2-&gt;8)- glycosidic linkages of terminal sialic acid residues in oligosaccharides, glycoproteins, glycolipids, colominic acid and synthetic substrates.. In terms of biological role, attaches the virus to sialic acid-containing cell receptors and thereby initiating infection. Binding of HN protein to the receptor induces a conformational change that allows the F protein to trigger virion/cell membranes fusion. Neuraminidase activity ensures the efficient spread of the virus by dissociating the mature virions from the neuraminic acid containing glycoproteins. The protein is Hemagglutinin-neuraminidase (HN) of Human parainfluenza 1 virus (strain Washington/1957) (HPIV-1).